The sequence spans 440 residues: Protein CANDIDATE G-PROTEIN COUPLED RECEPTOR 7 (440 aa).

The signal sequence occupies residues 1–24; that stretch reads MAKMPLSVVVFLLFSAAFLAVSMA. 2 N-linked (GlcNAc...) asparagine glycosylation sites follow: Asn124 and Asn162. A run of 5 helical transmembrane segments spans residues 175 to 195, 207 to 227, 243 to 263, 281 to 301, and 315 to 335; these read LPTLYSFFFLCYVAFLGFWSY, IHLLMAGLLLIKSLNLICAAE, ILFYIFQFIRVVLLFTVIILI, VLIIVIPLQVLANIASIVIGE, and VFLLVDIICCCAIIFPIVWSI. Asn351 is a glycosylation site (N-linked (GlcNAc...) asparagine). 2 helical membrane-spanning segments follow: residues 363 to 383 and 390 to 410; these read IVVIGYLYFTRIVVFALKTIA and VSFAAEEIVSLVFYVIMFHMF.

This sequence belongs to the LU7TM family.

It localises to the membrane. Functionally, plays a role in plants and microbes interactions. G-protein coupled receptor involved in root growth mediated by the bacterial quorum-sensing signals N-acyl-homoserine lactones (AHLs). This is Protein CANDIDATE G-PROTEIN COUPLED RECEPTOR 7 from Arabidopsis thaliana (Mouse-ear cress).